A 192-amino-acid polypeptide reads, in one-letter code: Acetyltransferase PA3944 (192 aa).

The N-acetyltransferase domain occupies 18 to 187 (LLLRAWRDSD…RHILYRVDAA (170 aa)). CoA is bound by residues 105–107 (WRL), G113, N145, and 150–152 (GLM).

In terms of biological role, catalyzes the transfer of an acetyl group from acetyl coenzyme A (AcCoA) to an acceptor substrate and releases both CoA and the acetylated product. It prefers the peptide Asp-Phe methyl ester (or aspartame) and the peptide antibiotics polymyxin B and colistin. Other substrates like dopamine, serotonin, puromycin, chloramphenicol, D-glucosamine, glycine and N-alpha-acetyl-L-glutamine are used and displayed lower activity. This chain is Acetyltransferase PA3944, found in Pseudomonas aeruginosa (strain ATCC 15692 / DSM 22644 / CIP 104116 / JCM 14847 / LMG 12228 / 1C / PRS 101 / PAO1).